The following is a 473-amino-acid chain: Cell division protein FtsP (473 aa).

The segment at residues M1–A27 is a signal peptide (tat-type signal).

Belongs to the FtsP family. In terms of processing, predicted to be exported by the Tat system. The position of the signal peptide cleavage has not been experimentally proven.

It localises to the periplasm. Its function is as follows. Cell division protein that is required for growth during stress conditions. May be involved in protecting or stabilizing the divisomal assembly under conditions of stress. This is Cell division protein FtsP from Photorhabdus laumondii subsp. laumondii (strain DSM 15139 / CIP 105565 / TT01) (Photorhabdus luminescens subsp. laumondii).